We begin with the raw amino-acid sequence, 185 residues long: Ribosome-recycling factor (185 aa).

The protein belongs to the RRF family.

The protein localises to the cytoplasm. Its function is as follows. Responsible for the release of ribosomes from messenger RNA at the termination of protein biosynthesis. May increase the efficiency of translation by recycling ribosomes from one round of translation to another. In Pseudomonas entomophila (strain L48), this protein is Ribosome-recycling factor.